Here is a 371-residue protein sequence, read N- to C-terminus: Cytochrome b (371 aa).

4 helical membrane-spanning segments follow: residues 25–45 (FGSM…FLAV), 69–90 (WMMQ…YIHI), 105–125 (WLSG…GYVL), and 170–190 (FFAL…LHIM). Heme b-binding residues include histidine 75 and histidine 89. Residues histidine 174 and histidine 188 each coordinate heme b. Residue histidine 193 participates in a ubiquinone binding. 4 helical membrane-spanning segments follow: residues 218 to 238 (YKDL…VSFL), 280 to 300 (LGGA…PFTH), 312 to 332 (IMQL…WAAT), and 339 to 358 (FTMI…IMNP).

Belongs to the cytochrome b family. As to quaternary structure, the cytochrome bc1 complex contains 3 respiratory subunits (MT-CYB, CYC1 and UQCRFS1), 2 core proteins (UQCRC1 and UQCRC2) and probably 6 low-molecular weight proteins. The cofactor is heme b.

The protein localises to the mitochondrion inner membrane. In terms of biological role, component of the ubiquinol-cytochrome c reductase complex (complex III or cytochrome b-c1 complex) that is part of the mitochondrial respiratory chain. The b-c1 complex mediates electron transfer from ubiquinol to cytochrome c. Contributes to the generation of a proton gradient across the mitochondrial membrane that is then used for ATP synthesis. In Eryx miliaris (Desert sand boa), this protein is Cytochrome b (MT-CYB).